The chain runs to 180 residues: ATP synthase subunit delta 2 (180 aa).

This sequence belongs to the ATPase delta chain family. As to quaternary structure, F-type ATPases have 2 components, F(1) - the catalytic core - and F(0) - the membrane proton channel. F(1) has five subunits: alpha(3), beta(3), gamma(1), delta(1), epsilon(1). F(0) has three main subunits: a(1), b(2) and c(10-14). The alpha and beta chains form an alternating ring which encloses part of the gamma chain. F(1) is attached to F(0) by a central stalk formed by the gamma and epsilon chains, while a peripheral stalk is formed by the delta and b chains.

The protein localises to the cell inner membrane. F(1)F(0) ATP synthase produces ATP from ADP in the presence of a proton or sodium gradient. F-type ATPases consist of two structural domains, F(1) containing the extramembraneous catalytic core and F(0) containing the membrane proton channel, linked together by a central stalk and a peripheral stalk. During catalysis, ATP synthesis in the catalytic domain of F(1) is coupled via a rotary mechanism of the central stalk subunits to proton translocation. In terms of biological role, this protein is part of the stalk that links CF(0) to CF(1). It either transmits conformational changes from CF(0) to CF(1) or is implicated in proton conduction. The protein is ATP synthase subunit delta 2 of Vibrio campbellii (strain ATCC BAA-1116).